The primary structure comprises 185 residues: Ribose 1,5-bisphosphate phosphokinase PhnN (185 aa).

10–17 (GPSGSGKD) lines the ATP pocket.

This sequence belongs to the ribose 1,5-bisphosphokinase family.

It catalyses the reaction alpha-D-ribose 1,5-bisphosphate + ATP = 5-phospho-alpha-D-ribose 1-diphosphate + ADP. Its pathway is metabolic intermediate biosynthesis; 5-phospho-alpha-D-ribose 1-diphosphate biosynthesis; 5-phospho-alpha-D-ribose 1-diphosphate from D-ribose 5-phosphate (route II): step 3/3. Its function is as follows. Catalyzes the phosphorylation of ribose 1,5-bisphosphate to 5-phospho-D-ribosyl alpha-1-diphosphate (PRPP). Accepts ATP but not GTP as a phosphoryl donor, and uses ribose 1,5-bisphosphate but not ribose, ribose 1-phosphate, or ribose 5-phosphate as a phosphoryl acceptor. The chain is Ribose 1,5-bisphosphate phosphokinase PhnN (phnN) from Escherichia coli (strain K12).